We begin with the raw amino-acid sequence, 1390 residues long: ATPase family AAA domain-containing protein 2 (1390 aa).

Residues 40–63 (RSAGAAQKKPAATTAKAGDGSSVK) are disordered. A compositionally biased stretch (low complexity) spans 42-57 (AGAAQKKPAATTAKAG). A phosphoserine mark is found at Ser-60 and Ser-61. A Glycyl lysine isopeptide (Lys-Gly) (interchain with G-Cter in SUMO2) cross-link involves residue Lys-125. Phosphoserine is present on residues Ser-165 and Ser-170. The interval 216–380 (LNMYTRGKQK…HFERRRKRSR (165 aa)) is disordered. Basic and acidic residues predominate over residues 223-232 (KQKDIQRTDE). The span at 244-288 (SSEEGEDQEHEDDGEDEDDEDDDDDDDDDDDDDDEDDEDEEDGEE) shows a compositional bias: acidic residues. A Glycyl lysine isopeptide (Lys-Gly) (interchain with G-Cter in SUMO2) cross-link involves residue Lys-317. 4 positions are modified to phosphoserine: Ser-327, Ser-337, Ser-342, and Ser-410. 467-474 (GPPGTGKT) contacts ATP. A phosphoserine mark is found at Ser-746 and Ser-751. Coiled coils occupy residues 970 to 994 (LTAE…IFLR) and 1086 to 1112 (YAII…KKRG). One can recognise a Bromo domain in the interval 980–1092 (EQEEDTFREL…DTAYAIIKEE (113 aa)). The segment at 1124-1163 (HVMPKQNSTLVGDKRSDPEQNEKLKTPSTPVACSTPAQLK) is disordered. Lys-1128 is covalently cross-linked (Glycyl lysine isopeptide (Lys-Gly) (interchain with G-Cter in SUMO2)). A compositionally biased stretch (basic and acidic residues) spans 1135 to 1148 (GDKRSDPEQNEKLK). Ser-1139 is subject to Phosphoserine. A Glycyl lysine isopeptide (Lys-Gly) (interchain with G-Cter in SUMO2) cross-link involves residue Lys-1148. Phosphothreonine is present on residues Thr-1149, Thr-1152, and Thr-1176. Residues 1149-1160 (TPSTPVACSTPA) are compositionally biased toward polar residues. The interval 1181 to 1242 (RKISQAKDDS…SESKLELRNN (62 aa)) is disordered. The segment covering 1185–1200 (QAKDDSQNAIDHKIES) has biased composition (basic and acidic residues). A phosphoserine mark is found at Ser-1200, Ser-1233, and Ser-1235. Polar residues predominate over residues 1229–1242 (QQNASESKLELRNN). A Glycyl lysine isopeptide (Lys-Gly) (interchain with G-Cter in SUMO2) cross-link involves residue Lys-1236. Phosphoserine is present on residues Ser-1243 and Ser-1302. The residue at position 1323 (Thr-1323) is a Phosphothreonine.

The protein belongs to the AAA ATPase family. Interacts with ESR1 and NCOA3 and these interactions are enhanced by estradiol. Interacts with acetylated lysine residues on histone H1.4, H2A, H2B and H3 (in vitro). In terms of tissue distribution, highly expressed in estrogen receptor positive breast tumors and in osteosarcoma tumors.

It localises to the nucleus. The enzyme catalyses ATP + H2O = ADP + phosphate + H(+). May be a transcriptional coactivator of the nuclear receptor ESR1 required to induce the expression of a subset of estradiol target genes, such as CCND1, MYC and E2F1. May play a role in the recruitment or occupancy of CREBBP at some ESR1 target gene promoters. May be required for histone hyperacetylation. Involved in the estrogen-induced cell proliferation and cell cycle progression of breast cancer cells. The sequence is that of ATPase family AAA domain-containing protein 2 (ATAD2) from Homo sapiens (Human).